The sequence spans 542 residues: CTP synthase (542 aa).

An amidoligase domain region spans residues 1 to 265; that stretch reads MARYVFITGG…DDEVLAAFGI (265 aa). Position 13 (serine 13) interacts with CTP. Serine 13 serves as a coordination point for UTP. ATP contacts are provided by residues 14–19 and aspartate 71; that span reads SLGKGI. Mg(2+) is bound by residues aspartate 71 and glutamate 139. Residues 146-148, 186-191, and lysine 222 each bind CTP; these read DIE and KTKPTQ. UTP-binding positions include 186-191 and lysine 222; that span reads KTKPTQ. Positions 291–541 constitute a Glutamine amidotransferase type-1 domain; sequence TIAIVGKYTG…IEAATEQSRL (251 aa). An L-glutamine-binding site is contributed by glycine 353. The active-site Nucleophile; for glutamine hydrolysis is cysteine 380. Residues 381 to 384, glutamate 404, and arginine 469 each bind L-glutamine; that span reads FGMQ. Catalysis depends on residues histidine 514 and glutamate 516.

This sequence belongs to the CTP synthase family. Homotetramer.

The catalysed reaction is UTP + L-glutamine + ATP + H2O = CTP + L-glutamate + ADP + phosphate + 2 H(+). It catalyses the reaction L-glutamine + H2O = L-glutamate + NH4(+). The enzyme catalyses UTP + NH4(+) + ATP = CTP + ADP + phosphate + 2 H(+). Its pathway is pyrimidine metabolism; CTP biosynthesis via de novo pathway; CTP from UDP: step 2/2. Its activity is regulated as follows. Allosterically activated by GTP, when glutamine is the substrate; GTP has no effect on the reaction when ammonia is the substrate. The allosteric effector GTP functions by stabilizing the protein conformation that binds the tetrahedral intermediate(s) formed during glutamine hydrolysis. Inhibited by the product CTP, via allosteric rather than competitive inhibition. In terms of biological role, catalyzes the ATP-dependent amination of UTP to CTP with either L-glutamine or ammonia as the source of nitrogen. Regulates intracellular CTP levels through interactions with the four ribonucleotide triphosphates. This chain is CTP synthase, found in Rhizobium etli (strain ATCC 51251 / DSM 11541 / JCM 21823 / NBRC 15573 / CFN 42).